Here is a 251-residue protein sequence, read N- to C-terminus: Insulin-induced gene 1 protein (251 aa).

Residues 1 to 58 (MQTLEEHCWSCSCTRGRDKKGTRLSTWLAQRAAKAMSSLNSLLSLAYHTLASSEGRSL) lie on the Cytoplasmic side of the membrane. The chain crosses the membrane as a helical span at residues 59–81 (IRRSLVLFAVGVFLALVLNLLQI). Residues 82-100 (QRNVTLFPEEVIATIFSSA) lie on the Extracellular side of the membrane. A helical membrane pass occupies residues 101 to 118 (WWVPPCCGTAAAVVGLLY). Topologically, residues 119 to 133 (PCIDSHLGEPHKFKR) are cytoplasmic. The chain crosses the membrane as a helical span at residues 134–156 (EWASVMRCIAVFVGINHASAKLD). The Extracellular segment spans residues 157–159 (FAN). Residues 160 to 178 (NVQLSLTLAALSLGLWWTF) traverse the membrane as a helical segment. The Cytoplasmic segment spans residues 179 to 183 (DRSRS). The helical transmembrane segment at 184–205 (GLGLGITIAFLATLITQFLVYN) threads the bilayer. At 206-219 (GVYQYTSPDFLYIR) the chain is on the extracellular side. A helical membrane pass occupies residues 220-237 (SWLPCIFFSGGVTVGNIG). Residues 238–251 (RQLAMGSSEKTHSD) lie on the Cytoplasmic side of the membrane. The short motif at 245–251 (SEKTHSD) is the KxHxx element.

It belongs to the INSIG family. In terms of assembly, interacts with scap; interaction is direct and only takes place in the presence of sterols; it prevents interaction between scap and the coat protein complex II (COPII). Associates with the SCAP-SREBP complex; association is mediated via its interaction with scap and only takes place in the presence of sterols.

It is found in the endoplasmic reticulum membrane. Its function is as follows. Oxysterol-binding protein that mediates feedback control of cholesterol synthesis by controlling both endoplasmic reticulum to Golgi transport of scap and degradation of hmgcr. Acts as a negative regulator of cholesterol biosynthesis by mediating the retention of the SCAP-SREBP complex in the endoplasmic reticulum, thereby blocking the processing of sterol regulatory element-binding proteins (SREBPs). Binds oxysterol, including 25-hydroxycholesterol, regulating interaction with scap and retention of the SCAP-SREBP complex in the endoplasmic reticulum. In presence of oxysterol, interacts with scap, retaining the SCAP-SREBP complex in the endoplasmic reticulum, thereby preventing scap from escorting SREBPs to the Golgi. Sterol deprivation reduces oxysterol-binding, disrupting the interaction between insig1 and scap, thereby promoting Golgi transport of the SCAP-SREBP complex, followed by processing and nuclear translocation of SREBPs. Also regulates cholesterol synthesis by regulating degradation of hmgcr. The sequence is that of Insulin-induced gene 1 protein from Xenopus tropicalis (Western clawed frog).